The chain runs to 203 residues: Pyrrolidone-carboxylate peptidase 1 (203 aa).

Catalysis depends on residues E78, C141, and H165.

It belongs to the peptidase C15 family. Homotetramer.

It is found in the cytoplasm. It catalyses the reaction Release of an N-terminal pyroglutamyl group from a polypeptide, the second amino acid generally not being Pro.. Removes 5-oxoproline from various penultimate amino acid residues except L-proline. This is Pyrrolidone-carboxylate peptidase 1 from Caldanaerobacter subterraneus subsp. tengcongensis (strain DSM 15242 / JCM 11007 / NBRC 100824 / MB4) (Thermoanaerobacter tengcongensis).